We begin with the raw amino-acid sequence, 91 residues long: Transcriptional repressor FrmR (91 aa).

Belongs to the FrmR/RcnR family. As to quaternary structure, homotetramer.

Its subcellular location is the cytoplasm. Formaldehyde sensor. In the absence of formaldehyde, mediates repression of the frmRAB operon. Acts by binding directly to the frmRAB promoter region. In the presence of formaldehyde, it dissociates from the frmRAB promoter region and allows expression of the formaldehyde detoxification system encoded by frmA and frmB. This is Transcriptional repressor FrmR from Escherichia coli (strain UTI89 / UPEC).